We begin with the raw amino-acid sequence, 545 residues long: Glucose-6-phosphate isomerase (545 aa).

The active-site Proton donor is Glu-349. Active-site residues include His-380 and Lys-509.

This sequence belongs to the GPI family.

The protein resides in the cytoplasm. It catalyses the reaction alpha-D-glucose 6-phosphate = beta-D-fructose 6-phosphate. The protein operates within carbohydrate biosynthesis; gluconeogenesis. It participates in carbohydrate degradation; glycolysis; D-glyceraldehyde 3-phosphate and glycerone phosphate from D-glucose: step 2/4. Its function is as follows. Catalyzes the reversible isomerization of glucose-6-phosphate to fructose-6-phosphate. The chain is Glucose-6-phosphate isomerase from Chelativorans sp. (strain BNC1).